The sequence spans 176 residues: Tubulin polymerization-promoting protein family member 3 (176 aa).

Residue Ala-2 is modified to N-acetylalanine. Positions 132–152 are disordered; that stretch reads TGSHKERFDESGKGKGIAGRQ. Positions 134–144 are enriched in basic and acidic residues; it reads SHKERFDESGK.

The protein belongs to the TPPP family.

The protein localises to the cytoplasm. It is found in the cytoskeleton. Functionally, regulator of microtubule dynamic that has microtubule bundling activity. Required for embryo implantation; possibly by regulating beta-catenin. Also required for decidualization via regulation of beta-catenin. The polypeptide is Tubulin polymerization-promoting protein family member 3 (Mus musculus (Mouse)).